A 354-amino-acid polypeptide reads, in one-letter code: Protein ECM8 (354 aa).

Functionally, may be involved in cell wall organization and biogenesis. The polypeptide is Protein ECM8 (ECM8) (Saccharomyces cerevisiae (strain ATCC 204508 / S288c) (Baker's yeast)).